The sequence spans 416 residues: 4-hydroxy-3-methylbut-2-en-1-yl diphosphate synthase (flavodoxin) (416 aa).

[4Fe-4S] cluster-binding residues include cysteine 304, cysteine 307, cysteine 350, and glutamate 357.

Belongs to the IspG family. [4Fe-4S] cluster serves as cofactor.

The enzyme catalyses (2E)-4-hydroxy-3-methylbut-2-enyl diphosphate + oxidized [flavodoxin] + H2O + 2 H(+) = 2-C-methyl-D-erythritol 2,4-cyclic diphosphate + reduced [flavodoxin]. It participates in isoprenoid biosynthesis; isopentenyl diphosphate biosynthesis via DXP pathway; isopentenyl diphosphate from 1-deoxy-D-xylulose 5-phosphate: step 5/6. Functionally, converts 2C-methyl-D-erythritol 2,4-cyclodiphosphate (ME-2,4cPP) into 1-hydroxy-2-methyl-2-(E)-butenyl 4-diphosphate. This chain is 4-hydroxy-3-methylbut-2-en-1-yl diphosphate synthase (flavodoxin), found in Rhizobium johnstonii (strain DSM 114642 / LMG 32736 / 3841) (Rhizobium leguminosarum bv. viciae).